The primary structure comprises 116 residues: Large ribosomal subunit protein bL20 (116 aa).

The protein belongs to the bacterial ribosomal protein bL20 family.

Functionally, binds directly to 23S ribosomal RNA and is necessary for the in vitro assembly process of the 50S ribosomal subunit. It is not involved in the protein synthesizing functions of that subunit. The protein is Large ribosomal subunit protein bL20 of Desulfatibacillum aliphaticivorans.